Here is a 244-residue protein sequence, read N- to C-terminus: DNA repair protein RecO (244 aa).

It belongs to the RecO family.

In terms of biological role, involved in DNA repair and RecF pathway recombination. This is DNA repair protein RecO from Nocardioides sp. (strain ATCC BAA-499 / JS614).